We begin with the raw amino-acid sequence, 144 residues long: MWLQNLLLLGTVVCSFSAPTRPASPVTRPWQHVDAIKEALSLLNHSSDTAAVMNETVEVVSEMFDSQEPTCLQTRLKLYKQGLRGSLTSLSGSLTMMARHYEQHCPPTQETSCETQTITFKSFKENLKDFLFIIPFDCWEPAQK.

Positions 1 to 17 (MWLQNLLLLGTVVCSFS) are cleaved as a signal peptide. O-linked (GalNAc...) serine glycosylation occurs at serine 24. A glycan (O-linked (GalNAc...) threonine) is linked at threonine 27. Asparagine 44 and asparagine 54 each carry an N-linked (GlcNAc...) asparagine glycan. 2 disulfide bridges follow: cysteine 71–cysteine 113 and cysteine 105–cysteine 138.

The protein belongs to the GM-CSF family. In terms of assembly, monomer. The signaling GM-CSF receptor complex is a dodecamer of two head-to-head hexamers of two alpha, two beta, and two ligand subunits.

The protein resides in the secreted. Its function is as follows. Cytokine that stimulates the growth and differentiation of hematopoietic precursor cells from various lineages, including granulocytes, macrophages, eosinophils and erythrocytes. The chain is Granulocyte-macrophage colony-stimulating factor (CSF2) from Cervus elaphus (Red deer).